A 394-amino-acid chain; its full sequence is Exodeoxyribonuclease 7 large subunit (394 aa).

It belongs to the XseA family. In terms of assembly, heterooligomer composed of large and small subunits.

The protein localises to the cytoplasm. It catalyses the reaction Exonucleolytic cleavage in either 5'- to 3'- or 3'- to 5'-direction to yield nucleoside 5'-phosphates.. Bidirectionally degrades single-stranded DNA into large acid-insoluble oligonucleotides, which are then degraded further into small acid-soluble oligonucleotides. The polypeptide is Exodeoxyribonuclease 7 large subunit (Thermotoga maritima (strain ATCC 43589 / DSM 3109 / JCM 10099 / NBRC 100826 / MSB8)).